The sequence spans 782 residues: Calcium-independent phospholipase A2-gamma (782 aa).

Residue asparagine 4 is glycosylated (N-linked (GlcNAc...) asparagine). Disordered stretches follow at residues 219–275 (EKMS…PSAI) and 317–343 (SKSQSEEQEEPAKTDQAVSKDRNAEEK). Over residues 220–248 (KMSQQKENEHFRDKSELEDKKVEEGKLRS) the composition is skewed to basic and acidic residues. Asparagine 361 carries N-linked (GlcNAc...) asparagine glycosylation. The PNPLA domain occupies 445 to 640 (LSIDGGGTRG…LLNNPSALAM (196 aa)). Positions 449-454 (GGGTRG) match the GXGXXG motif. Residues 475-495 (LFDYICGVSTGAILAFMLGLF) traverse the membrane as a helical segment. Positions 481–485 (GVSTG) match the GXSXG motif. The active-site Nucleophile is the serine 483. Aspartate 627 serves as the catalytic Proton acceptor. A DGA/G motif is present at residues 627 to 629 (DGG). Lysine 736 bears the N6-succinyllysine mark.

Expressed in parenchymal tissues including heart, skeletal muscle, placenta, brain, liver and pancreas. Also expressed in bronchial epithelial cells and kidney. Highest expression is observed in skeletal muscle and heart.

The protein localises to the endoplasmic reticulum membrane. Its subcellular location is the mitochondrion membrane. It is found in the peroxisome membrane. It carries out the reaction a 1,2-diacyl-sn-glycero-3-phosphocholine + H2O = a 1-acyl-sn-glycero-3-phosphocholine + a fatty acid + H(+). It catalyses the reaction a 1,2-diacyl-sn-glycero-3-phosphocholine + H2O = a 2-acyl-sn-glycero-3-phosphocholine + a fatty acid + H(+). The catalysed reaction is a 1,2-diacyl-sn-glycero-3-phosphoethanolamine + H2O = a 1-acyl-sn-glycero-3-phosphoethanolamine + a fatty acid + H(+). The enzyme catalyses a 1-O-(1Z-alkenyl)-2-acyl-sn-glycero-3-phosphocholine + H2O = a 1-O-(1Z-alkenyl)-sn-glycero-3-phosphocholine + a fatty acid + H(+). It carries out the reaction a 1-acyl-sn-glycero-3-phosphocholine + H2O = sn-glycerol 3-phosphocholine + a fatty acid + H(+). It catalyses the reaction 1-acyl-2-(9Z,12Z)-octadecadienoyl-sn-glycero-3-phosphocholine + H2O = a 1-acyl-sn-glycero-3-phosphocholine + (9Z,12Z)-octadecadienoate + H(+). The catalysed reaction is 1-acyl-2-(5Z,8Z,11Z,14Z-eicosatetraenoyl)-sn-glycero-3-phosphocholine + H2O = a 1-acyl-sn-glycero-3-phosphocholine + (5Z,8Z,11Z,14Z)-eicosatetraenoate + H(+). The enzyme catalyses 1-hexadecanoyl-2-(5Z,8Z,11Z,14Z-eicosatetraenoyl)-sn-glycero-3-phosphocholine + H2O = 1-hexadecanoyl-sn-glycero-3-phosphocholine + (5Z,8Z,11Z,14Z)-eicosatetraenoate + H(+). It carries out the reaction 1-octadecanoyl-2-(9Z-octadecenoyl)-sn-glycero-3-phosphocholine + H2O = 1-octadecanoyl-sn-glycero-3-phosphocholine + (9Z)-octadecenoate + H(+). It catalyses the reaction 1-hexadecanoyl-2-(9Z-octadecenoyl)-sn-glycero-3-phosphocholine + H2O = 1-hexadecanoyl-sn-glycero-3-phosphocholine + (9Z)-octadecenoate + H(+). The catalysed reaction is 1-hexadecanoyl-2-(9Z,12Z-octadecadienoyl)-sn-glycero-3-phosphocholine + H2O = (9Z,12Z)-octadecadienoate + 1-hexadecanoyl-sn-glycero-3-phosphocholine + H(+). The enzyme catalyses 1-acyl-2-(9Z,12Z)-octadecadienoyl-sn-glycero-3-phosphoethanolamine + H2O = a 1-acyl-sn-glycero-3-phosphoethanolamine + (9Z,12Z)-octadecadienoate + H(+). It carries out the reaction 1-acyl-2-(5Z,8Z,11Z,14Z)-eicosatetraenoyl-sn-glycero-3-phosphoethanolamine + H2O = a 1-acyl-sn-glycero-3-phosphoethanolamine + (5Z,8Z,11Z,14Z)-eicosatetraenoate + H(+). It catalyses the reaction 1-hexadecanoyl-2-(5Z,8Z,11Z,14Z-eicosatetraenoyl)-sn-glycero-3-phosphoethanolamine + H2O = 1-hexadecanoyl-sn-glycero-3-phosphoethanolamine + (5Z,8Z,11Z,14Z)-eicosatetraenoate + H(+). The catalysed reaction is 1-hexadecanoyl-2-(5Z,8Z,11Z,14Z-eicosatetraenoyl)-sn-glycero-3-phosphocholine + H2O = 2-(5Z,8Z,11Z,14Z)-eicosatetraenoyl-sn-glycero-3-phosphocholine + hexadecanoate + H(+). The enzyme catalyses 1-octadecanoyl-2-(9Z-octadecenoyl)-sn-glycero-3-phosphocholine + H2O = 2-(9Z-octadecenoyl)-sn-glycero-3-phosphocholine + octadecanoate + H(+). It carries out the reaction 1-hexadecanoyl-2-(4Z,7Z,10Z,13Z,16Z,19Z-docosahexaenoyl)-sn-glycero-3-phosphocholine + H2O = 2-(4Z,7Z,10Z,13Z,16Z,19Z-docosahexaenoyl)-sn-glycero-3-phosphocholine + hexadecanoate + H(+). It catalyses the reaction 1-O-(1Z)-hexadecenyl-2 (5Z,8Z,11Z,14Z)-eicosatetraenoyl-sn-glycero-3-phosphocholine + H2O = 1-(1Z-hexadecenyl)-sn-glycero-3-phosphocholine + (5Z,8Z,11Z,14Z)-eicosatetraenoate + H(+). The catalysed reaction is 1-O-(1Z-hexadecenyl)-2-(9Z-octadecenoyl)-sn-glycero-3-phosphocholine + H2O = 1-(1Z-hexadecenyl)-sn-glycero-3-phosphocholine + (9Z)-octadecenoate + H(+). The enzyme catalyses 1-hexadecanoyl-sn-glycero-3-phosphocholine + H2O = sn-glycerol 3-phosphocholine + hexadecanoate + H(+). It carries out the reaction 1',3'-bis-[1,2-di-(9Z,12Z-octadecadienoyl)-sn-glycero-3-phospho]-glycerol + H2O = 1'-[1,2-di-(9Z,12Z-octadecadienoyl)-sn-glycero-3-phospho]-3'-[1-(9Z,12Z-octadecadienoyl)-sn-glycero-3-phospho]-glycerol + (9Z,12Z)-octadecadienoate + H(+). It catalyses the reaction 1'-[1-acyl-2-(9-hydroxy-(10E,12Z)-octadecadienoyl)-sn-glycero-3-phospho]-3'-[1,2-diacyl-sn-glycero-3-phospho]-glycerol + H2O = 9-hydroxy-(10E,12Z)-octadecadienoate + 1'-[1,2-diacyl-sn-glycero-3-phospho],3'-[1-acyl-sn-glycero-3-phospho]-glycerol + H(+). The protein operates within phospholipid metabolism. Calcium-independent phospholipase. Inhibited by (E)-6-bromomethylene-3-1-naphthalenyl-2H-tetrahydropyran-2-one (BEL). The activity toward 1-hexadecanoyl-2-(5Z,8Z,11Z,14Z-eicosatetraenoyl)-sn-glycero-3-phosphocholine is stimulated by cardiolipin. Functionally, calcium-independent and membrane-bound phospholipase, that catalyzes the esterolytic cleavage of fatty acids from glycerophospholipids to yield free fatty acids and lysophospholipids, hence regulating membrane physical properties and the release of lipid second messengers and growth factors. Hydrolyzes phosphatidylethanolamine, phosphatidylcholine and probably phosphatidylinositol with a possible preference for the former. Also has a broad substrate specificity in terms of fatty acid moieties, hydrolyzing saturated and mono-unsaturated fatty acids at nearly equal rates from either the sn-1 or sn-2 position in diacyl phosphatidylcholine. However, has a weak activity toward polyunsaturated fatty acids at the sn-2 position, and thereby favors the production of 2-arachidonoyl lysophosphatidylcholine, a key branch point metabolite in eicosanoid signaling. On the other hand, can produce arachidonic acid from the sn-1 position of diacyl phospholipid and from the sn-2 position of arachidonate-containing plasmalogen substrates. Therefore, plays an important role in the mobilization of arachidonic acid in response to cellular stimuli and the generation of lipid second messengers. Can also hydrolyze lysophosphatidylcholine. In the mitochondrial compartment, catalyzes the hydrolysis and release of oxidized aliphatic chains from cardiolipin and integrates mitochondrial bioenergetics and signaling. It is essential for maintaining efficient bioenergetic mitochondrial function through tailoring mitochondrial membrane lipid metabolism and composition. The chain is Calcium-independent phospholipase A2-gamma from Homo sapiens (Human).